Here is a 2596-residue protein sequence, read N- to C-terminus: Protein unc-79 homolog (2596 aa).

S754 and S758 each carry phosphoserine. Disordered regions lie at residues 907 to 931, 1539 to 1573, 1594 to 1632, 1648 to 1679, 1695 to 1832, and 1863 to 1909; these read GPEGEEEENPAAKHGENPGNRTVPS, SQRQNDHHGRSRQNSATRPDNTEIPKNPGTEGFQE, VDSPGKPAPREDLDLIDLSSDSTSGPEKHSILSTSDSDS, EEEEMMNQGNGGALGNNAASSPSIPSQPSVLS, KDFS…FKIQ, and LGEQ…KQIQ. Residues 1594 to 1606 show a composition bias toward basic and acidic residues; sequence VDSPGKPAPREDL. Residues 1662–1679 show a composition bias toward low complexity; it reads GNNAASSPSIPSQPSVLS. Polar residues predominate over residues 1704 to 1713; the sequence is NHQSASNEDS. Residues 1726-1735 are compositionally biased toward basic and acidic residues; that stretch reads ELSKSEELRE. Over residues 1897–1908 the composition is skewed to polar residues; sequence ETSSHSSISKQI. A run of 2 helical transmembrane segments spans residues 2184–2204 and 2426–2446; these read LLSFVIQNAVFTLAYLVELCG and CVLHMCSLFHAFIFAQLWTVY.

This sequence belongs to the unc-79 family. In terms of assembly, NALCN complex consists of NALCN and auxiliary subunits, UNC79, UNC80 and NACL1. These auxiliary subunits are essential for the NALCN channel function. UNC80 bridges NALCN to UNC79. Interacts with NALCN. Interacts with UNC80.

It is found in the cell membrane. Its function is as follows. Auxiliary subunit of the NALCN sodium channel complex. The NALCN sodium channel complex is a voltage-gated ion channel responsible for the resting Na(+) permeability that controls neuronal excitability. Activated by neuropeptides substance P, neurotensin, and extracellular calcium that regulates neuronal excitability by controlling the sizes of NALCN-dependent sodium-leak current. This Mus musculus (Mouse) protein is Protein unc-79 homolog (Unc79).